Here is a 164-residue protein sequence, read N- to C-terminus: Protein SprT (164 aa).

The SprT-like domain maps to 14–156 (QLAESFFKRP…LCRRCRNTLV (143 aa)). Residue histidine 69 participates in Zn(2+) binding. The active site involves glutamate 70. Histidine 73 is a binding site for Zn(2+).

It belongs to the SprT family. It depends on Zn(2+) as a cofactor.

It localises to the cytoplasm. The chain is Protein SprT from Pseudomonas fluorescens (strain Pf0-1).